The primary structure comprises 135 residues: Ribonuclease VapC26 (135 aa).

The PINc domain maps to 1–118; the sequence is MIIDTSALLA…TRTILTLDRR (118 aa). Mg(2+) is bound by residues aspartate 4 and aspartate 97.

Belongs to the PINc/VapC protein family. It depends on Mg(2+) as a cofactor.

Functionally, toxic component of a type II toxin-antitoxin (TA) system. An RNase. Upon expression in M.smegmatis inhibits colony formation. Its toxic effect is neutralized by coexpression with cognate antitoxin VapB26. The sequence is that of Ribonuclease VapC26 from Mycobacterium tuberculosis (strain ATCC 25618 / H37Rv).